Consider the following 222-residue polypeptide: Collectrin (222 aa).

The first 14 residues, Met-1–Ala-14, serve as a signal peptide directing secretion. Topologically, residues Asp-15 to Pro-141 are extracellular. In terms of domain architecture, Collectrin-like spans Ala-21–Leu-222. N-linked (GlcNAc...) asparagine glycosylation is found at Asn-76 and Asn-93. The chain crosses the membrane as a helical span at residues Ile-142–Ile-162. Topologically, residues Ile-163 to Leu-222 are cytoplasmic. A phosphothreonine mark is found at Thr-214 and Thr-220.

This sequence belongs to the CLTRN family. In terms of assembly, monomer. Homodimer; dimerization prevents CLTRN cleavage by BACE2. Interacts with SLC6A18; this interaction regulates the trafficking of SLC6A18 to the cell membrane and its amino acid transporter activity. Interacts with SLC6A19; this interaction regulates the trafficking of SLC6A19 to the cell membrane and its amino acid transporter activity. Interacts with SNAPIN. Glycosylated. Glycosylation is required for plasma membrane localization and for its cleavage by BACE2. Post-translationally, proteolytically processed in pancreatic beta cells by BACE2 leading to the generation and extracellular release of soluble CLTRN, and a corresponding cell-associated C-terminal fragment which is later cleaved by gamma-secretase. This shedding process inactivates CLTRN. Three cleavage sites have been identified for BACE2, two clustered sites after Phe-116 and Leu-118 and a more membrane proximal site at Phe-125; the preferred BACE2 cleavage site seems to be between Phe-125 and Leu-126, Phe-116 and Leu-118 act as alternative sites.

The protein localises to the cell membrane. Its function is as follows. Plays an important role in amino acid transport by acting as binding partner of amino acid transporters SLC6A18 and SLC6A19, regulating their trafficking on the cell surface and their activity. May also play a role in trafficking of amino acid transporters SLC3A1 and SLC7A9 to the renal cortical cell membrane. Regulator of SNARE complex function. Stimulator of beta cell replication. This is Collectrin (CLTRN) from Bos taurus (Bovine).